A 136-amino-acid chain; its full sequence is Large ribosomal subunit protein uL16 (136 aa).

The protein belongs to the universal ribosomal protein uL16 family. Part of the 50S ribosomal subunit.

Binds 23S rRNA and is also seen to make contacts with the A and possibly P site tRNAs. This is Large ribosomal subunit protein uL16 from Rickettsia massiliae (strain Mtu5).